Consider the following 227-residue polypeptide: Phosphoribosylformylglycinamidine synthase subunit PurQ (227 aa).

Residues 3-225 (FAVIVFPGSN…LKQWRETYVV (223 aa)) enclose the Glutamine amidotransferase type-1 domain. Cysteine 86 serves as the catalytic Nucleophile. Active-site residues include histidine 194 and glutamate 196.

As to quaternary structure, part of the FGAM synthase complex composed of 1 PurL, 1 PurQ and 2 PurS subunits.

It is found in the cytoplasm. It carries out the reaction N(2)-formyl-N(1)-(5-phospho-beta-D-ribosyl)glycinamide + L-glutamine + ATP + H2O = 2-formamido-N(1)-(5-O-phospho-beta-D-ribosyl)acetamidine + L-glutamate + ADP + phosphate + H(+). It catalyses the reaction L-glutamine + H2O = L-glutamate + NH4(+). It functions in the pathway purine metabolism; IMP biosynthesis via de novo pathway; 5-amino-1-(5-phospho-D-ribosyl)imidazole from N(2)-formyl-N(1)-(5-phospho-D-ribosyl)glycinamide: step 1/2. Its function is as follows. Part of the phosphoribosylformylglycinamidine synthase complex involved in the purines biosynthetic pathway. Catalyzes the ATP-dependent conversion of formylglycinamide ribonucleotide (FGAR) and glutamine to yield formylglycinamidine ribonucleotide (FGAM) and glutamate. The FGAM synthase complex is composed of three subunits. PurQ produces an ammonia molecule by converting glutamine to glutamate. PurL transfers the ammonia molecule to FGAR to form FGAM in an ATP-dependent manner. PurS interacts with PurQ and PurL and is thought to assist in the transfer of the ammonia molecule from PurQ to PurL. The sequence is that of Phosphoribosylformylglycinamidine synthase subunit PurQ from Bacillus cereus (strain B4264).